We begin with the raw amino-acid sequence, 386 residues long: Homogentisate solanesyltransferase, chloroplastic (386 aa).

The N-terminal 69 residues, 1–69, are a transit peptide targeting the chloroplast; it reads MELSISQSPR…STNYRKISIR (69 aa). The next 8 membrane-spanning stretches (helical) occupy residues 130-150, 181-201, 204-220, 225-245, 259-279, 306-326, 335-355, and 365-385; these read VLKA…IVGI, LVIF…GPFI, LYSL…VPPL, FPVA…NFGV, WSAP…VIAI, IAFL…SLAF, SLMI…TWVL, and ISGY…LFPF.

It belongs to the UbiA prenyltransferase family.

It localises to the plastid. The protein localises to the chloroplast membrane. It carries out the reaction all-trans-nonaprenyl diphosphate + homogentisate + H(+) = 2-methyl-6-(all-trans-nonaprenyl)benzene-1,4-diol + CO2 + diphosphate. Its activity is regulated as follows. Inhibited by haloxydine (3,5-dichloro-2,6-difluoro-4-haloxypyridine). In terms of biological role, involved in the synthesis of plastoquinone-9. Can use both homogentisic acid and 2,5-dihydroxyphenylacetic acid gamma-lactone as prenyl acceptors, and solanesyl diphosphate &gt; farnesyl diphosphate &gt; geranylgeranyl diphosphate &gt;&gt; phytyl diphosphate as prenyl donors. Do not catalyze the decardoxylation of homogentisate uncoupled from prenylation. In Arabidopsis thaliana (Mouse-ear cress), this protein is Homogentisate solanesyltransferase, chloroplastic (HST).